A 158-amino-acid polypeptide reads, in one-letter code: Mitotic-spindle organizing protein 2B (158 aa).

Ser34 carries the phosphoserine modification. The tract at residues 84 to 158 (RLASEPQDPA…PGKSPTRGST (75 aa)) is disordered. Residues 111-122 (GSAALGGALALA) are compositionally biased toward low complexity. Residues 128–140 (EGSSQRMPRQPSA) show a composition bias toward polar residues. Ser152 carries the post-translational modification Phosphoserine.

Belongs to the MOZART2 family. As to quaternary structure, associates with the gamma-tubulin ring complex (gTuRC) consisting of TUBGCP2, TUBGCP3, TUBGCP4, TUBGCP5 and TUBGCP6 and gamma-tubulin TUBG1 or TUBG2; within the complex, interacts with TUBGCP2; the interaction plays a role in gTuRC activation. Interacts with TUBG1.

It localises to the cytoplasm. The protein localises to the cytoskeleton. The protein resides in the microtubule organizing center. It is found in the centrosome. Its subcellular location is the spindle. Functionally, required for the recruitment and the assembly of the gamma-tubulin ring complex (gTuRC) at the centrosome. The gTuRC regulates the minus-end nucleation of alpha-beta tubulin heterodimers that grow into microtubule protafilaments, a critical step in centrosome duplication and spindle formation. The protein is Mitotic-spindle organizing protein 2B (MZT2B) of Homo sapiens (Human).